A 227-amino-acid chain; its full sequence is UPF0758 protein lpg2489 (227 aa).

The MPN domain maps to 102-225; the sequence is RLSNTQQTYA…YSIFAENKWV (124 aa). Residues His173, His175, and Asp186 each coordinate Zn(2+). The short motif at 173–186 is the JAMM motif element; the sequence is HNHPSGLSDASQQD.

The protein belongs to the UPF0758 family.

This Legionella pneumophila subsp. pneumophila (strain Philadelphia 1 / ATCC 33152 / DSM 7513) protein is UPF0758 protein lpg2489.